Here is a 149-residue protein sequence, read N- to C-terminus: Stathmin (149 aa).

A2 is modified (N-acetylalanine). At S4 the chain carries Phosphoserine. The SLD domain occupies 4 to 145 (SDIQVKELEK…NKESKDPADE (142 aa)). At K9 the chain carries N6-acetyllysine. Phosphoserine; by PKA is present on S16. The residue at position 25 (S25) is a Phosphoserine; by CDK1, MAPK1 and MAPK3. The tract at residues 27–46 (RSKESVPDFPLSPPKKKDLS) is disordered. K29 carries the N6-methyllysine modification. The residue at position 31 (S31) is a Phosphoserine. Phosphoserine; by CDK1, MAPK1 and MAPK3 is present on S38. Residues 41-140 (KKKDLSLEEI…EEVRKNKESK (100 aa)) are a coiled coil. S63 bears the Phosphoserine; by PKA mark. N6-acetyllysine occurs at positions 100 and 119. Over residues 104 to 143 (KMEANKENREAQMAAKLERLREKDKHVEEVRKNKESKDPA) the composition is skewed to basic and acidic residues. The tract at residues 104–149 (KMEANKENREAQMAAKLERLREKDKHVEEVRKNKESKDPADETEAD) is disordered.

It belongs to the stathmin family. As to quaternary structure, binds to two alpha/beta-tubulin heterodimers. Interacts with KIST. In terms of processing, many different phosphorylated forms are observed depending on specific combinations among the sites which can be phosphorylated. MAPK is responsible for the phosphorylation of stathmin in response to NGF. Phosphorylation at Ser-16 seems to be required for neuron polarization. As to expression, highly expressed in the lateral nucleus of the amygdala.

Its subcellular location is the cytoplasm. The protein localises to the cytoskeleton. Involved in the regulation of the microtubule (MT) filament system by destabilizing microtubules. Prevents assembly and promotes disassembly of microtubules. Phosphorylation at Ser-16 may be required for axon formation during neurogenesis. Involved in the control of the learned and innate fear. The sequence is that of Stathmin (Stmn1) from Mus musculus (Mouse).